A 43-amino-acid chain; its full sequence is Protein PsbN (43 aa).

The chain crosses the membrane as a helical span at residues 4–24 (ATVLSITFAVILIAITGLAVY).

Belongs to the PsbN family.

Its subcellular location is the cellular thylakoid membrane. Its function is as follows. May play a role in photosystem I and II biogenesis. The polypeptide is Protein PsbN (Synechocystis sp. (strain ATCC 27184 / PCC 6803 / Kazusa)).